The primary structure comprises 264 residues: Small ribosomal subunit protein uS2 (264 aa).

It belongs to the universal ribosomal protein uS2 family.

The polypeptide is Small ribosomal subunit protein uS2 (Synechococcus sp. (strain JA-2-3B'a(2-13)) (Cyanobacteria bacterium Yellowstone B-Prime)).